Here is a 274-residue protein sequence, read N- to C-terminus: uncharacterized protein (274 aa).

This is an uncharacterized protein from Methanocaldococcus jannaschii (strain ATCC 43067 / DSM 2661 / JAL-1 / JCM 10045 / NBRC 100440) (Methanococcus jannaschii).